We begin with the raw amino-acid sequence, 1024 residues long: Protein translocase subunit SecA (1024 aa).

ATP is bound by residues Gln-143, 161–165, and Asp-661; that span reads GEGKT. A disordered region spans residues 970 to 1024; that stretch reads HKAAESVYTASSDEPETNQEESPQQPAIAEKKPGRNDLCPCGSGKKYKNCHGQQP. Zn(2+) is bound by residues Cys-1008, Cys-1010, Cys-1019, and His-1020.

It belongs to the SecA family. Monomer and homodimer. Part of the essential Sec protein translocation apparatus which comprises SecA, SecYEG and auxiliary proteins SecDF. Other proteins may also be involved. The cofactor is Zn(2+).

The protein localises to the cell inner membrane. Its subcellular location is the cytoplasm. The catalysed reaction is ATP + H2O + cellular proteinSide 1 = ADP + phosphate + cellular proteinSide 2.. Part of the Sec protein translocase complex. Interacts with the SecYEG preprotein conducting channel. Has a central role in coupling the hydrolysis of ATP to the transfer of proteins into and across the cell membrane, serving as an ATP-driven molecular motor driving the stepwise translocation of polypeptide chains across the membrane. The chain is Protein translocase subunit SecA from Pelodictyon phaeoclathratiforme (strain DSM 5477 / BU-1).